Consider the following 86-residue polypeptide: Omega-theraphotoxin-Hhn1f 3 (86 aa).

An N-terminal signal peptide occupies residues 1-21 (MKSIVFVALFGLALLAVACSA). Positions 22 to 50 (SEDAHKELLKEVVRAMVVDKTDAVQAEER) are excised as a propeptide. 3 disulfide bridges follow: Cys-52–Cys-66, Cys-59–Cys-71, and Cys-65–Cys-78.

Belongs to the neurotoxin 10 (Hwtx-1) family. 17 (Hntx-9) subfamily. Expressed by the venom gland.

The protein localises to the secreted. Ion channel inhibitor. In Cyriopagopus hainanus (Chinese bird spider), this protein is Omega-theraphotoxin-Hhn1f 3.